The primary structure comprises 154 residues: Endoribonuclease YbeY (154 aa).

3 residues coordinate Zn(2+): H113, H117, and H123.

This sequence belongs to the endoribonuclease YbeY family. The cofactor is Zn(2+).

It localises to the cytoplasm. Functionally, single strand-specific metallo-endoribonuclease involved in late-stage 70S ribosome quality control and in maturation of the 3' terminus of the 16S rRNA. The polypeptide is Endoribonuclease YbeY (Ehrlichia chaffeensis (strain ATCC CRL-10679 / Arkansas)).